The sequence spans 62 residues: uncharacterized protein (62 aa).

4Fe-4S ferredoxin-type domains are found at residues 2–31 and 32–62; these read AVTIDYSLCKGAECAECVNNCPMEVFEIEG and DKVVVARPDDCTYCGVCEDVCPTGAVKVEPE. The [4Fe-4S] cluster site is built by cysteine 10, cysteine 15, cysteine 18, cysteine 22, cysteine 42, cysteine 45, cysteine 48, and cysteine 52.

The cofactor is [4Fe-4S] cluster.

This is an uncharacterized protein from Methanocaldococcus jannaschii (strain ATCC 43067 / DSM 2661 / JAL-1 / JCM 10045 / NBRC 100440) (Methanococcus jannaschii).